The primary structure comprises 471 residues: QKDANFASGRNSIVHLFEWKWNDIADECERFLQPQGFGGVQISPPNEYLVADGRPWWERYQPVSYIINTRSGDESAFTDMTRRCNDAGVRIYVDAVINHMTGMNGVGTSGSSADHDGMNYPAVPYGSGDFHSPCEVNNYQDADNVRNCELVGLRDLNQGSDYVRGVLIDYMNHMIDLGVAGFRVDAAKHMSPGDLSVIFSGLKNLNTDYGFADGARPFIYQEVIDLGGEAISKNEYTGFGCVLEFQFGVSLGNAFQGGNQLKNLANWGPEWGLLEGLDAVVFVDNHDNQRTGGSQILTYKNPKPYKMAIAFMLAHPYGTTRIMSSFDFTDNDQGPPQDGSGNLISPGINDDNTCSNGYVCEHRWRQVYGMVGFRNAVEGTQVENWWSNDDNQIAFSRGSQGFVAFTNGGDLNQNLNTGLPAGTYCDVISGELSGGSCTGKSVTVGDNGSADISLGSAEDDGVLAIHVNAKL.

Pyrrolidone carboxylic acid is present on Q1. Residues C28 and C84 are joined by a disulfide bond. Residues N98, R146, and D155 each coordinate Ca(2+). A disulfide bond links C134 and C148. R183 contributes to the chloride binding site. Catalysis depends on D185, which acts as the Nucleophile. Ca(2+) is bound at residue H189. The Proton donor role is filled by E222. Residues N285 and R321 each contribute to the chloride site. Positions F326–L343 are enriched in polar residues. The disordered stretch occupies residues F326–P346. Cystine bridges form between C354-C360 and C425-C437.

Belongs to the glycosyl hydrolase 13 family. In terms of assembly, monomer. It depends on Ca(2+) as a cofactor. Chloride is required as a cofactor.

It carries out the reaction Endohydrolysis of (1-&gt;4)-alpha-D-glucosidic linkages in polysaccharides containing three or more (1-&gt;4)-alpha-linked D-glucose units.. The chain is Alpha-amylase from Tenebrio molitor (Yellow mealworm beetle).